A 268-amino-acid polypeptide reads, in one-letter code: MERYESLFAQLKERKEGAFVPFVTLRDPGIEQSLKIIDTLIEAGADALELGIPFSDPLADGPTIQNATLRAFAAGVTPAQCFEMLALIRQKHPTIPIGLLMYANLVFNKGIDEFYAQCEKVGVDSVLVADVPVEESAPFRQAALRHNVAPIFICPPNADDDLLRQIASYGRGYTYLLSRAGVTGAENRAALPLNHLVAKLKEYNAAPPLQGFGISAPDQVKAAIDAGAAGAISGSAIVKIIEQHINEPEKMLAALKVFVQPMKAATRS.

Residues Glu-49 and Asp-60 each act as proton acceptor in the active site.

It belongs to the TrpA family. As to quaternary structure, tetramer of two alpha and two beta chains.

The catalysed reaction is (1S,2R)-1-C-(indol-3-yl)glycerol 3-phosphate + L-serine = D-glyceraldehyde 3-phosphate + L-tryptophan + H2O. It functions in the pathway amino-acid biosynthesis; L-tryptophan biosynthesis; L-tryptophan from chorismate: step 5/5. Functionally, the alpha subunit is responsible for the aldol cleavage of indoleglycerol phosphate to indole and glyceraldehyde 3-phosphate. In Shigella boydii serotype 4 (strain Sb227), this protein is Tryptophan synthase alpha chain.